The primary structure comprises 358 residues: CRS2-associated factor 2, mitochondrial (358 aa).

Residues 1 to 28 (MLSIRRSLTLAKEPKDLFLFLCNLRARC) constitute a mitochondrion transit peptide. The interval 35–64 (DPPFSPLSKPTKPPKEKKKQKTKKQDQSSE) is disordered. 2 consecutive CRM domains span residues 141–239 (ETLT…SRPI) and 261–357 (DGLE…ELVT).

Part of large ribonucleo-protein complexes that include group IIB introns.

Its subcellular location is the mitochondrion. In terms of biological role, may be involved in the splicing of group IIB introns in mitochondria. In Arabidopsis thaliana (Mouse-ear cress), this protein is CRS2-associated factor 2, mitochondrial.